Reading from the N-terminus, the 620-residue chain is Translation initiation factor IF-2 (620 aa).

Residues 126 to 295 (KRPPIVTIMG…IVTAEIMELK (170 aa)) enclose the tr-type G domain. Residues 135 to 142 (GHVDHGKT) are G1. 135–142 (GHVDHGKT) contacts GTP. The G2 stretch occupies residues 160–164 (NITQS). A G3 region spans residues 181-184 (DTPG). GTP is bound by residues 181–185 (DTPGH) and 235–238 (NKMD). The G4 stretch occupies residues 235–238 (NKMD). Residues 271-273 (SAL) are G5.

It belongs to the TRAFAC class translation factor GTPase superfamily. Classic translation factor GTPase family. IF-2 subfamily.

It localises to the cytoplasm. Functionally, one of the essential components for the initiation of protein synthesis. Protects formylmethionyl-tRNA from spontaneous hydrolysis and promotes its binding to the 30S ribosomal subunits. Also involved in the hydrolysis of GTP during the formation of the 70S ribosomal complex. In Malacoplasma penetrans (strain HF-2) (Mycoplasma penetrans), this protein is Translation initiation factor IF-2.